Reading from the N-terminus, the 334-residue chain is Protein RecA (334 aa).

65–72 provides a ligand contact to ATP; sequence GNESSGKT.

It belongs to the RecA family.

It is found in the cytoplasm. Can catalyze the hydrolysis of ATP in the presence of single-stranded DNA, the ATP-dependent uptake of single-stranded DNA by duplex DNA, and the ATP-dependent hybridization of homologous single-stranded DNAs. It interacts with LexA causing its activation and leading to its autocatalytic cleavage. The sequence is that of Protein RecA from Ureaplasma parvum serovar 3 (strain ATCC 27815 / 27 / NCTC 11736).